The primary structure comprises 581 residues: 2-succinyl-5-enolpyruvyl-6-hydroxy-3-cyclohexene-1-carboxylate synthase (581 aa).

Belongs to the TPP enzyme family. MenD subfamily. Homodimer. The cofactor is Mg(2+). Mn(2+) serves as cofactor. Requires thiamine diphosphate as cofactor.

The enzyme catalyses isochorismate + 2-oxoglutarate + H(+) = 5-enolpyruvoyl-6-hydroxy-2-succinyl-cyclohex-3-ene-1-carboxylate + CO2. It functions in the pathway quinol/quinone metabolism; 1,4-dihydroxy-2-naphthoate biosynthesis; 1,4-dihydroxy-2-naphthoate from chorismate: step 2/7. Its pathway is quinol/quinone metabolism; menaquinone biosynthesis. Its function is as follows. Catalyzes the thiamine diphosphate-dependent decarboxylation of 2-oxoglutarate and the subsequent addition of the resulting succinic semialdehyde-thiamine pyrophosphate anion to isochorismate to yield 2-succinyl-5-enolpyruvyl-6-hydroxy-3-cyclohexene-1-carboxylate (SEPHCHC). The polypeptide is 2-succinyl-5-enolpyruvyl-6-hydroxy-3-cyclohexene-1-carboxylate synthase (Chlorobium phaeobacteroides (strain BS1)).